Reading from the N-terminus, the 530-residue chain is MRFSGRFKGYNLQKFQKDLIAGIVVGVVAIPLGMAFAIASGVEPEYGLYTVVIAGICISLFGGSKYQIGGPTGAFVPILFGIIMQYGLENLLIAGFMAGVMLVLFGLFKLGKIMKFVPKPVIVGFTAGIAVLIFTEQIANFLGLRNVEKHENFHHNMFEIVQQLGTFNVYAILTAVIGLVILLVSAKVMPKVPGALLALLISTVVAVVFFPDRMATIGSTYGEIPRHLPEFQFPELTLDKMVMLFPAALVIALLGGLESILSAMVADNMKGSKHDSNKELVGQGIANMAAPLFGGIPATGAIARTATNIKNGAVSPVSGVVHGVVVLLVLLVFAPYASHVPLASMAPILMVVAWNMSERKEVANMLRLKNADSFILAATFALTVLFDLIIGVATGLLLAFVFFIRRMSEATRIHNQETHPVLAKREDPSVSMYAIEGPLFFGSIDSLESSLLEHVQKKPKTLILLMNKVHYMDTSAEAVLGNIMNRIKRHNGKLMIVGLQSQPKELLHKTGLFHKIGKQHFFDHHDEITG.

The next 10 helical transmembrane spans lie at 19–39 (LIAG…FAIA), 41–61 (GVEP…ISLF), 68–88 (IGGP…QYGL), 91–111 (LLIA…FKLG), 121–141 (VIVG…IANF), 164–184 (LGTF…ILLV), 192–212 (VPGA…FFPD), 241–261 (MVML…ESIL), 313–333 (AVSP…LLVF), and 384–404 (VLFD…VFFI). The STAS domain occupies 420 to 530 (PVLAKREDPS…FFDHHDEITG (111 aa)).

The protein belongs to the SLC26A/SulP transporter (TC 2.A.53) family.

The protein localises to the cell membrane. The chain is Putative sulfate transporter YvdB (yvdB) from Bacillus subtilis (strain 168).